Reading from the N-terminus, the 138-residue chain is Large ribosomal subunit protein uL16 (138 aa).

A compositionally biased stretch (basic residues) spans 1 to 15 (MLSPKKVKYRKKQRG). Positions 1 to 21 (MLSPKKVKYRKKQRGRLSGEA) are disordered.

This sequence belongs to the universal ribosomal protein uL16 family. Part of the 50S ribosomal subunit.

In terms of biological role, binds 23S rRNA and is also seen to make contacts with the A and possibly P site tRNAs. This is Large ribosomal subunit protein uL16 from Borreliella burgdorferi (strain ATCC 35210 / DSM 4680 / CIP 102532 / B31) (Borrelia burgdorferi).